The chain runs to 361 residues: Peptide chain release factor 1 (361 aa).

Gln-240 is subject to N5-methylglutamine.

It belongs to the prokaryotic/mitochondrial release factor family. In terms of processing, methylated by PrmC. Methylation increases the termination efficiency of RF1.

Its subcellular location is the cytoplasm. Peptide chain release factor 1 directs the termination of translation in response to the peptide chain termination codons UAG and UAA. This is Peptide chain release factor 1 from Mycobacterium leprae (strain Br4923).